The primary structure comprises 483 residues: Spore germination protein B1 (483 aa).

5 helical membrane passes run 289–309, 323–343, 353–373, 375–395, and 410–430; these read ILITIYLPGLYISLVSFHTGL, LNVPFPPFVEAFIMIFTIELI, PIGQTIGLIGGVVIGQAAVQA, IVSALMVIVVSVTALASFTVP, and VMISATALGMYGVIMVYLFVI.

The protein belongs to the GerABKA family.

The protein resides in the cell membrane. Its function is as follows. Involved in the response to the germinative mixture of L-asparagine, glucose, fructose and potassium ions (AGFK). Cannot stimulate germination in the absence of gerD and gerK gene products (fructose and glucose receptors respectively). The polypeptide is Spore germination protein B1 (gerBA) (Bacillus subtilis (strain 168)).